The following is a 100-amino-acid chain: MIIMNLQIFAHKKGMGSSKNGRDSESKRLGTKSADGQFVLAGNILVRQRGTKIHPGKNVGRGSDDTLFSKIDGIVRYERFGKTKKKASVYPLEVEELVAE.

Positions 1–9 (MIIMNLQIF) are excised as a propeptide. Positions 13–32 (KGMGSSKNGRDSESKRLGTK) are disordered.

It belongs to the bacterial ribosomal protein bL27 family. Post-translationally, the N-terminus is cleaved by ribosomal processing cysteine protease Prp.

In Clostridium kluyveri (strain ATCC 8527 / DSM 555 / NBRC 12016 / NCIMB 10680 / K1), this protein is Large ribosomal subunit protein bL27.